The chain runs to 95 residues: Co-chaperonin GroES (95 aa).

Belongs to the GroES chaperonin family. In terms of assembly, heptamer of 7 subunits arranged in a ring. Interacts with the chaperonin GroEL.

The protein localises to the cytoplasm. In terms of biological role, together with the chaperonin GroEL, plays an essential role in assisting protein folding. The GroEL-GroES system forms a nano-cage that allows encapsulation of the non-native substrate proteins and provides a physical environment optimized to promote and accelerate protein folding. GroES binds to the apical surface of the GroEL ring, thereby capping the opening of the GroEL channel. The sequence is that of Co-chaperonin GroES from Chlorobaculum tepidum (strain ATCC 49652 / DSM 12025 / NBRC 103806 / TLS) (Chlorobium tepidum).